The chain runs to 147 residues: MAVHKEVSFVAYLLIVLGMFLYVDALGCTKECGNLGFGICPRSEGSPTNPICINCCSGYKGCNYYSAFGDLICQGESDPKNPKACPLNCDTNIAYSRCPRSEGKSLIYPTGCTTCCTGYKGCYYFGTNGKFVCEGESDEPKPYMSTA.

Residues 1–25 (MAVHKEVSFVAYLLIVLGMFLYVDA) form the signal peptide. 2 consecutive repeat copies span residues 25–82 (ALGC…PKNP) and 83–142 (KACP…EPKP). 8 disulfide bridges follow: cysteine 28–cysteine 116, cysteine 32–cysteine 112, cysteine 40–cysteine 122, cysteine 52–cysteine 89, cysteine 55–cysteine 73, cysteine 56–cysteine 85, cysteine 62–cysteine 98, and cysteine 115–cysteine 133.

The protein belongs to the protease inhibitor I20 (potato type II proteinase inhibitor) family.

Functionally, inhibitor of trypsin and chymotrypsin. The polypeptide is Proteinase inhibitor type-2 T (PIN2T) (Solanum tuberosum (Potato)).